The sequence spans 259 residues: MTDLKASSLRALKLMDLTTLNDDDTDEKVIALCHQAKTPVGNTAAICIYPRFIPIARKTLKEQGTPEIRIATVTNFPHGNDDIEIALAETRAAIAYGADEVDVVFPYRALMAGNEQVGFDLVKACKEACAAANVLLKVIIETGELKDEALIRKASEISIKAGADFIKTSTGKVAVNATPESARIMMEVIRDMGVEKIVGFKPAGGVRTAEDAQKYLAIADELFGADWADARHYRFGASSLLASLLKALGHGDGKSASSY.

Asp102 acts as the Proton donor/acceptor in catalysis. Residue Lys167 is the Schiff-base intermediate with acetaldehyde of the active site. Lys201 (proton donor/acceptor) is an active-site residue.

Belongs to the DeoC/FbaB aldolase family. DeoC type 2 subfamily.

It is found in the cytoplasm. The catalysed reaction is 2-deoxy-D-ribose 5-phosphate = D-glyceraldehyde 3-phosphate + acetaldehyde. The protein operates within carbohydrate degradation; 2-deoxy-D-ribose 1-phosphate degradation; D-glyceraldehyde 3-phosphate and acetaldehyde from 2-deoxy-alpha-D-ribose 1-phosphate: step 2/2. In terms of biological role, catalyzes a reversible aldol reaction between acetaldehyde and D-glyceraldehyde 3-phosphate to generate 2-deoxy-D-ribose 5-phosphate. This Escherichia coli O1:K1 / APEC protein is Deoxyribose-phosphate aldolase.